We begin with the raw amino-acid sequence, 1318 residues long: Putative tetratricopeptide repeat protein 41 (1318 aa).

TPR repeat units lie at residues threonine 399–isoleucine 432, tryptophan 653–glutamate 684, cysteine 817–serine 850, leucine 858–leucine 891, methionine 991–alanine 1027, and serine 1045–histidine 1082.

Its subcellular location is the cytoplasm. In Homo sapiens (Human), this protein is Putative tetratricopeptide repeat protein 41.